The following is a 345-amino-acid chain: Ferrochelatase (345 aa).

Residues His-215 and Glu-296 each coordinate Fe cation.

Belongs to the ferrochelatase family.

It localises to the cytoplasm. It catalyses the reaction heme b + 2 H(+) = protoporphyrin IX + Fe(2+). The protein operates within porphyrin-containing compound metabolism; protoheme biosynthesis; protoheme from protoporphyrin-IX: step 1/1. Functionally, catalyzes the ferrous insertion into protoporphyrin IX. The protein is Ferrochelatase of Rhodopseudomonas palustris (strain BisA53).